A 342-amino-acid polypeptide reads, in one-letter code: Strictosidine synthase (342 aa).

A signal peptide spans 1-20 (KLSDSQTMALFTVFLLFLSS). The N-linked (GlcNAc...) asparagine glycan is linked to N89.

It belongs to the strictosidine synthase family. Monomer.

Its subcellular location is the vacuole. The catalysed reaction is 3alpha(S)-strictosidine + H2O = secologanin + tryptamine. Its pathway is alkaloid biosynthesis; 3alpha(S)-strictosidine biosynthesis; 3alpha(S)-strictosidine from secologanin and tryptamine: step 1/1. Functionally, catalyzes the stereospecific condensation of tryptamine with secologanin to form strictosidine, the key intermediate of indole alkaloid biosynthesis. The protein is Strictosidine synthase (STR1) of Rauvolfia mannii.